The chain runs to 4466 residues: Dynein beta chain, ciliary (4466 aa).

A stem region spans residues 1–1813 (MGDVVDARLD…YANICDAQFK (1813 aa)). An ATP-binding site is contributed by 154-161 (AGQVKGKT). Coiled coils occupy residues 482–502 (QEFLEDYEEFEKKVFDLDRRL), 627–643 (QKYEEMLNLLNKYEQKV), 734–805 (VLEV…WTKQ), 1036–1056 (TLDQFKEQVDTYEKIYSEADE), 1306–1337 (WLEINVEQMEMDCKKFAKDIRSLDKEMRAWDA), and 1443–1468 (LLKSNEELIETLEDNQVQLQNLMTSK). AAA stretches follow at residues 1814–2035 (YSYE…VLVV), 2095–2316 (KVVK…IRFK), 2422–2669 (ELDP…VFQG), and 2767–3016 (TYNE…ERRY). Residues 1852 to 1859 (GPAGTGKT), 2133 to 2140 (GNAGTGKS), 2460 to 2467 (GNAGLGKS), and 2805 to 2812 (GVGGSGKQ) contribute to the ATP site. 3 coiled-coil regions span residues 3033-3134 (SLLA…AKAE), 3263-3325 (EPKR…SRTI), and 3573-3642 (QERP…EEAK). Residues 3033–3325 (SLLAMKSKEL…QEAEATSRTI (293 aa)) are stalk. AAA regions lie at residues 3409 to 3636 (LTDD…EISV) and 3846 to 4072 (VRNF…VLYN).

Belongs to the dynein heavy chain family. As to quaternary structure, consists of at least two heavy chains (alpha and beta), three intermediate chains and several light chains.

It is found in the cell projection. The protein resides in the cilium. Its subcellular location is the flagellum. It localises to the cytoplasm. The protein localises to the cytoskeleton. It is found in the flagellum axoneme. Force generating protein of eukaryotic cilia and flagella. Produces force towards the minus ends of microtubules. Dynein has ATPase activity; the force-producing power stroke is thought to occur on release of ADP. In Heliocidaris crassispina (Sea urchin), this protein is Dynein beta chain, ciliary.